Reading from the N-terminus, the 298-residue chain is Lysozyme-like protein 1 (298 aa).

Positions 1-16 (MLKLAFVTFLFALASA) are cleaved as a signal peptide. Residues 59–277 (YAYAVDISVP…AAASSKNTDF (219 aa)) enclose the Ch-type lysozyme domain.

The protein belongs to the glycosyl hydrolase 25 family. Expressed in intestine, IL2 and IL6 neurons and some neurons in the head ganglia.

It localises to the cytoplasmic vesicle lumen. Its function is as follows. Involved in resistance to Gram-negative bacterium S.marcescens and to bacterium Gram-positive S.aureus infection. The chain is Lysozyme-like protein 1 from Caenorhabditis elegans.